The primary structure comprises 275 residues: Dermonecrotic toxin LamSicTox-alphaIV1ii (275 aa).

His-5 is an active-site residue. Residues Glu-25 and Asp-27 each contribute to the Mg(2+) site. His-41 (nucleophile) is an active-site residue. 2 disulfides stabilise this stretch: Cys-45–Cys-51 and Cys-47–Cys-192. Asp-85 serves as a coordination point for Mg(2+).

Belongs to the arthropod phospholipase D family. Class II subfamily. Requires Mg(2+) as cofactor. In terms of tissue distribution, expressed by the venom gland.

The protein resides in the secreted. The enzyme catalyses an N-(acyl)-sphingosylphosphocholine = an N-(acyl)-sphingosyl-1,3-cyclic phosphate + choline. It catalyses the reaction an N-(acyl)-sphingosylphosphoethanolamine = an N-(acyl)-sphingosyl-1,3-cyclic phosphate + ethanolamine. The catalysed reaction is a 1-acyl-sn-glycero-3-phosphocholine = a 1-acyl-sn-glycero-2,3-cyclic phosphate + choline. It carries out the reaction a 1-acyl-sn-glycero-3-phosphoethanolamine = a 1-acyl-sn-glycero-2,3-cyclic phosphate + ethanolamine. Its function is as follows. Dermonecrotic toxins cleave the phosphodiester linkage between the phosphate and headgroup of certain phospholipids (sphingolipid and lysolipid substrates), forming an alcohol (often choline) and a cyclic phosphate. This toxin acts on sphingomyelin (SM). It may also act on ceramide phosphoethanolamine (CPE), lysophosphatidylcholine (LPC) and lysophosphatidylethanolamine (LPE), but not on lysophosphatidylserine (LPS), and lysophosphatidylglycerol (LPG). It acts by transphosphatidylation, releasing exclusively cyclic phosphate products as second products. Induces dermonecrosis, hemolysis, increased vascular permeability, edema, inflammatory response, and platelet aggregation. In Loxosceles amazonica (Recluse spider), this protein is Dermonecrotic toxin LamSicTox-alphaIV1ii.